The sequence spans 890 residues: Translation initiation factor IF-2 (890 aa).

Positions Ile-110 to His-216 are disordered. Basic residues predominate over residues Val-135–Arg-148. The span at Lys-184–Lys-199 shows a compositional bias: basic and acidic residues. Residues Gln-200 to Leu-210 show a composition bias toward basic residues. In terms of domain architecture, tr-type G spans Thr-387–Glu-554. The interval Gly-396–Thr-403 is G1. Gly-396–Thr-403 is a GTP binding site. Residues Gly-421–His-425 form a G2 region. The segment at Asp-442–Gly-445 is G3. GTP-binding positions include Asp-442–His-446 and Asn-496–Asp-499. The G4 stretch occupies residues Asn-496–Asp-499. The segment at Ser-532–Arg-534 is G5.

This sequence belongs to the TRAFAC class translation factor GTPase superfamily. Classic translation factor GTPase family. IF-2 subfamily.

Its subcellular location is the cytoplasm. In terms of biological role, one of the essential components for the initiation of protein synthesis. Protects formylmethionyl-tRNA from spontaneous hydrolysis and promotes its binding to the 30S ribosomal subunits. Also involved in the hydrolysis of GTP during the formation of the 70S ribosomal complex. The protein is Translation initiation factor IF-2 of Aliarcobacter butzleri (strain RM4018) (Arcobacter butzleri).